Here is a 498-residue protein sequence, read N- to C-terminus: Putative BTB/POZ domain-containing protein L788 (498 aa).

Residues 28–99 (TDIILVLEDD…FYGQKIKSGN (72 aa)) enclose the BTB domain.

The protein belongs to the mimivirus BTB/WD family.

This is Putative BTB/POZ domain-containing protein L788 from Acanthamoeba polyphaga (Amoeba).